The following is a 384-amino-acid chain: 1-deoxy-D-xylulose 5-phosphate reductoisomerase (384 aa).

The NADPH site is built by Thr-10, Gly-11, Ser-12, Ile-13, Gly-36, Lys-37, Asn-38, and Asn-121. Lys-122 contacts 1-deoxy-D-xylulose 5-phosphate. An NADPH-binding site is contributed by Glu-123. A Mn(2+)-binding site is contributed by Asp-147. The 1-deoxy-D-xylulose 5-phosphate site is built by Ser-148, Glu-149, Ser-173, and His-196. Glu-149 is a binding site for Mn(2+). Gly-202 lines the NADPH pocket. 1-deoxy-D-xylulose 5-phosphate contacts are provided by Ser-209, Asn-214, Lys-215, and Glu-218. Glu-218 is a Mn(2+) binding site.

This sequence belongs to the DXR family. Requires Mg(2+) as cofactor. The cofactor is Mn(2+).

The catalysed reaction is 2-C-methyl-D-erythritol 4-phosphate + NADP(+) = 1-deoxy-D-xylulose 5-phosphate + NADPH + H(+). It participates in isoprenoid biosynthesis; isopentenyl diphosphate biosynthesis via DXP pathway; isopentenyl diphosphate from 1-deoxy-D-xylulose 5-phosphate: step 1/6. Functionally, catalyzes the NADPH-dependent rearrangement and reduction of 1-deoxy-D-xylulose-5-phosphate (DXP) to 2-C-methyl-D-erythritol 4-phosphate (MEP). The sequence is that of 1-deoxy-D-xylulose 5-phosphate reductoisomerase from Exiguobacterium sibiricum (strain DSM 17290 / CCUG 55495 / CIP 109462 / JCM 13490 / 255-15).